A 197-amino-acid polypeptide reads, in one-letter code: dTTP/UTP pyrophosphatase (197 aa).

Residue Asp70 is the Proton acceptor of the active site.

Belongs to the Maf family. YhdE subfamily. It depends on a divalent metal cation as a cofactor.

It localises to the cytoplasm. It catalyses the reaction dTTP + H2O = dTMP + diphosphate + H(+). It carries out the reaction UTP + H2O = UMP + diphosphate + H(+). Nucleoside triphosphate pyrophosphatase that hydrolyzes dTTP and UTP. May have a dual role in cell division arrest and in preventing the incorporation of modified nucleotides into cellular nucleic acids. In Pectobacterium atrosepticum (strain SCRI 1043 / ATCC BAA-672) (Erwinia carotovora subsp. atroseptica), this protein is dTTP/UTP pyrophosphatase.